A 103-amino-acid polypeptide reads, in one-letter code: MQNQKIRIRLKAFDYHLIDRSAQEIVDTAKRTGAVVKGPVPLPTKIERFDILRSPHVNKTSRDQFEIRTHLRLMDIIDPTDKTVDALMKLDLPAGVDVEIKLQ.

It belongs to the universal ribosomal protein uS10 family. In terms of assembly, part of the 30S ribosomal subunit.

In terms of biological role, involved in the binding of tRNA to the ribosomes. The polypeptide is Small ribosomal subunit protein uS10 (Laribacter hongkongensis (strain HLHK9)).